Consider the following 125-residue polypeptide: Large ribosomal subunit protein bL12 (125 aa).

This sequence belongs to the bacterial ribosomal protein bL12 family. As to quaternary structure, homodimer. Part of the ribosomal stalk of the 50S ribosomal subunit. Forms a multimeric L10(L12)X complex, where L10 forms an elongated spine to which 2 to 4 L12 dimers bind in a sequential fashion. Binds GTP-bound translation factors.

Functionally, forms part of the ribosomal stalk which helps the ribosome interact with GTP-bound translation factors. Is thus essential for accurate translation. The polypeptide is Large ribosomal subunit protein bL12 (Cereibacter sphaeroides (strain ATCC 17023 / DSM 158 / JCM 6121 / CCUG 31486 / LMG 2827 / NBRC 12203 / NCIMB 8253 / ATH 2.4.1.) (Rhodobacter sphaeroides)).